The chain runs to 209 residues: GTP-binding nuclear protein Ran1B (209 aa).

The Small GTPase Ran-type domain occupies 1 to 162 (NFKLVIVGDG…LYLARKLAGD (162 aa)). Position 9–16 (9–16 (DGGTGKTT)) interacts with GTP. The segment at 28–36 (KKYEPTIGV) is switch-I. GTP is bound by residues glycine 59, 113 to 116 (NKVD), and 141 to 143 (SAK). A switch-II region spans residues 59–75 (GQEKFGGLRDGYYIHGQ). Residues 187–200 (QHEAELAAAASQPL) are compositionally biased toward low complexity. Positions 187 to 209 (QHEAELAAAASQPLPDDDDDAFD) are disordered.

It belongs to the small GTPase superfamily. Ran family. In terms of assembly, found in a nuclear export complex with RanGTP, exportin and pre-miRNA.

Its subcellular location is the nucleus. Functionally, GTP-binding protein involved in nucleocytoplasmic transport. Required for the import of protein into the nucleus and also for RNA export. Involved in chromatin condensation and control of cell cycle. The chain is GTP-binding nuclear protein Ran1B (RAN1B) from Lotus japonicus (Lotus corniculatus var. japonicus).